Reading from the N-terminus, the 252-residue chain is Imidazole glycerol phosphate synthase subunit HisF (252 aa).

Catalysis depends on residues Asp11 and Asp130.

It belongs to the HisA/HisF family. As to quaternary structure, heterodimer of HisH and HisF.

The protein localises to the cytoplasm. It carries out the reaction 5-[(5-phospho-1-deoxy-D-ribulos-1-ylimino)methylamino]-1-(5-phospho-beta-D-ribosyl)imidazole-4-carboxamide + L-glutamine = D-erythro-1-(imidazol-4-yl)glycerol 3-phosphate + 5-amino-1-(5-phospho-beta-D-ribosyl)imidazole-4-carboxamide + L-glutamate + H(+). It participates in amino-acid biosynthesis; L-histidine biosynthesis; L-histidine from 5-phospho-alpha-D-ribose 1-diphosphate: step 5/9. Functionally, IGPS catalyzes the conversion of PRFAR and glutamine to IGP, AICAR and glutamate. The HisF subunit catalyzes the cyclization activity that produces IGP and AICAR from PRFAR using the ammonia provided by the HisH subunit. This chain is Imidazole glycerol phosphate synthase subunit HisF, found in Bacillus cereus (strain G9842).